The sequence spans 1387 residues: Kinesin-like protein KIF15-B (1387 aa).

Residues 26 to 364 (AIKVFVRIRP…LQFAQRAKLI (339 aa)) form the Kinesin motor domain. 110 to 117 (GQTGSGKT) contributes to the ATP binding site. Residues 369–1383 (VVNEDTQGNV…NLFLKETKKC (1015 aa)) are a coiled coil. The tract at residues 1138–1387 (NSPVVLAQTP…KETKKCEHCD (250 aa)) is necessary for its targeting to microtubule minus ends.

This sequence belongs to the TRAFAC class myosin-kinesin ATPase superfamily. Kinesin family. KLP2 subfamily. As to quaternary structure, homodimer. Dimerization is required for targeting to microtubule minus ends. Found in a complex with tpx2 and microtubules. Its association with microtubules and targeting to microtubule minus ends requires tpx2. In terms of tissue distribution, strongly expressed in testis and weakly in lung (at protein level).

The protein localises to the cytoplasm. Its subcellular location is the cytoskeleton. It localises to the microtubule organizing center. The protein resides in the centrosome. It is found in the spindle. The protein localises to the spindle pole. Its function is as follows. Plus-end directed kinesin-like motor enzyme involved in mitotic spindle assembly. Required for centrosome separation and maintenance of spindle bipolarity during mitosis. This Xenopus laevis (African clawed frog) protein is Kinesin-like protein KIF15-B (kif15-b).